The chain runs to 363 residues: Chorismate synthase (363 aa).

Positions 42–61 (QRDLDRRKPGTSRHTTQRQE) are disordered. NADP(+) is bound by residues Arg48 and Arg54. FMN is bound by residues 125 to 127 (RSS), 237 to 238 (NA), Gly277, 292 to 296 (KPTSS), and Arg318.

Belongs to the chorismate synthase family. Homotetramer. The cofactor is FMNH2.

It catalyses the reaction 5-O-(1-carboxyvinyl)-3-phosphoshikimate = chorismate + phosphate. It functions in the pathway metabolic intermediate biosynthesis; chorismate biosynthesis; chorismate from D-erythrose 4-phosphate and phosphoenolpyruvate: step 7/7. Catalyzes the anti-1,4-elimination of the C-3 phosphate and the C-6 proR hydrogen from 5-enolpyruvylshikimate-3-phosphate (EPSP) to yield chorismate, which is the branch point compound that serves as the starting substrate for the three terminal pathways of aromatic amino acid biosynthesis. This reaction introduces a second double bond into the aromatic ring system. The sequence is that of Chorismate synthase from Pseudomonas aeruginosa (strain LESB58).